Reading from the N-terminus, the 377-residue chain is 23S rRNA (uracil(747)-C(5))-methyltransferase RlmC (377 aa).

[4Fe-4S] cluster-binding residues include C3, C11, C14, and C87. Positions 212, 241, 262, and 307 each coordinate S-adenosyl-L-methionine. Residue C334 is the Nucleophile of the active site.

Belongs to the class I-like SAM-binding methyltransferase superfamily. RNA M5U methyltransferase family. RlmC subfamily.

It carries out the reaction uridine(747) in 23S rRNA + S-adenosyl-L-methionine = 5-methyluridine(747) in 23S rRNA + S-adenosyl-L-homocysteine + H(+). Functionally, catalyzes the formation of 5-methyl-uridine at position 747 (m5U747) in 23S rRNA. The chain is 23S rRNA (uracil(747)-C(5))-methyltransferase RlmC from Edwardsiella ictaluri (strain 93-146).